The following is a 152-amino-acid chain: Transcriptional repressor NrdR (152 aa).

The segment at 3 to 34 (CPSCQHNGTRVLDSRPVDDGKSIRRRRECESC) is a zinc-finger region. Residues 49–139 (LIVVKKEGVR…VYRQFKDINV (91 aa)) enclose the ATP-cone domain.

It belongs to the NrdR family. It depends on Zn(2+) as a cofactor.

In terms of biological role, negatively regulates transcription of bacterial ribonucleotide reductase nrd genes and operons by binding to NrdR-boxes. In Bacillus subtilis (strain 168), this protein is Transcriptional repressor NrdR.